Reading from the N-terminus, the 316-residue chain is Biotin synthase (316 aa).

Positions 42-268 constitute a Radical SAM core domain; the sequence is LCGESVDLCT…INPTAYIRMA (227 aa). [4Fe-4S] cluster-binding residues include Cys-60, Cys-64, and Cys-67. Positions 104, 136, 196, and 266 each coordinate [2Fe-2S] cluster.

Belongs to the radical SAM superfamily. Biotin synthase family. In terms of assembly, homodimer. It depends on [4Fe-4S] cluster as a cofactor. Requires [2Fe-2S] cluster as cofactor.

It carries out the reaction (4R,5S)-dethiobiotin + (sulfur carrier)-SH + 2 reduced [2Fe-2S]-[ferredoxin] + 2 S-adenosyl-L-methionine = (sulfur carrier)-H + biotin + 2 5'-deoxyadenosine + 2 L-methionine + 2 oxidized [2Fe-2S]-[ferredoxin]. Its pathway is cofactor biosynthesis; biotin biosynthesis; biotin from 7,8-diaminononanoate: step 2/2. Catalyzes the conversion of dethiobiotin (DTB) to biotin by the insertion of a sulfur atom into dethiobiotin via a radical-based mechanism. The polypeptide is Biotin synthase (Clostridium beijerinckii (strain ATCC 51743 / NCIMB 8052) (Clostridium acetobutylicum)).